Reading from the N-terminus, the 122-residue chain is Large ribosomal subunit protein uL14 (122 aa).

The protein belongs to the universal ribosomal protein uL14 family. In terms of assembly, part of the 50S ribosomal subunit. Forms a cluster with proteins L3 and L19. In the 70S ribosome, L14 and L19 interact and together make contacts with the 16S rRNA in bridges B5 and B8.

In terms of biological role, binds to 23S rRNA. Forms part of two intersubunit bridges in the 70S ribosome. This Geotalea daltonii (strain DSM 22248 / JCM 15807 / FRC-32) (Geobacter daltonii) protein is Large ribosomal subunit protein uL14.